Here is a 542-residue protein sequence, read N- to C-terminus: Tripartite motif-containing protein 26 (542 aa).

The segment at 16 to 57 (CSICLDYLRDPVTIDCGHVFCRSCTSDIRPISGNRPVCPLCK) adopts an RING-type zinc-finger fold. A B box-type zinc finger spans residues 97-138 (QDMKLCERHQEKLHYYCEDDGKLLCVMCRESREHRPHTAVLV). Zn(2+)-binding residues include cysteine 102, histidine 105, cysteine 124, and histidine 130. Residues 197 to 243 (QFLKKREQHLLDQLATLEQLLTEGREKFKTRGVSELDRLTLVISELE) adopt a coiled-coil conformation. The B30.2/SPRY domain occupies 298–542 (RGLRQFQGKL…WPEARLLLRP (245 aa)). Residues 379–440 (REGWSEDEEE…EEEEEVQESC (62 aa)) form a disordered region. Composition is skewed to acidic residues over residues 383–405 (SEDEEEGEEEEEGEEEEEDEEPG) and 413–437 (WETDEEDESLGEEEEEEEEEEEEVQ). A coiled-coil region spans residues 411 to 440 (EDWETDEEDESLGEEEEEEEEEEEEVQESC).

This sequence belongs to the TRIM/RBCC family. In terms of assembly, interacts with TBK1; this interaction bridges together TBK1 and NEMO in order to activate TBK1. Interacts with INCA1. Autoubiquitinates upon viral infection. In turn, autoubiquitinated TRIM26 recruits NEMO and bridges TBK1-NEMO interaction.

It is found in the cytoplasm. It localises to the nucleus. It catalyses the reaction S-ubiquitinyl-[E2 ubiquitin-conjugating enzyme]-L-cysteine + [acceptor protein]-L-lysine = [E2 ubiquitin-conjugating enzyme]-L-cysteine + N(6)-ubiquitinyl-[acceptor protein]-L-lysine.. Functionally, E3 ubiquitin-protein ligase which regulates the IFN-beta production and antiviral response downstream of various DNA-encoded pattern-recognition receptors (PRRs). Also plays a central role in determining the response to different forms of oxidative stress by controlling levels of DNA glycosylases NEIL1, NEIL3 and NTH1 that are involved in repair of damaged DNA. Promotes nuclear IRF3 ubiquitination and proteasomal degradation. Bridges together TBK1 and NEMO during the innate response to viral infection leading to the activation of TBK1. Positively regulates LPS-mediated inflammatory innate immune response by catalyzing the 'Lys-11'-linked polyubiquitination of TAB1 to enhance its activation and subsequent NF-kappa-B and MAPK signaling. In a manner independent of its catalytic activity, inhibits WWP2, a SOX2-directed E3 ubiquitin ligase, and thus protects SOX2 from polyubiquitination and proteasomal degradation. Ubiquitinates the histone acetyltransferase protein complex component PHF20 and thereby triggers its degradation in the nucleus after its recruitment by the histone demethylase KDM6B, serving as a scaffold protein. Upon induction by TGF-beta, ubiquitinates the TFIID component TAF7 for proteasomal degradation. Induces ferroptosis by ubiquitinating SLC7A11, a critical protein for lipid reactive oxygen species (ROS) scavenging. The chain is Tripartite motif-containing protein 26 (Trim26) from Rattus norvegicus (Rat).